The primary structure comprises 348 residues: D-alanine--D-alanine ligase (348 aa).

In terms of domain architecture, ATP-grasp spans 136-341 (KYLLQTVGIP…YSDLIEELIQ (206 aa)). 169 to 224 (EGSLIYPVFVKPANMGSSVGISKVENREELQEALEEAFRYDARAIVEQGIEAREIE) contributes to the ATP binding site. Residues aspartate 295, glutamate 308, and asparagine 310 each contribute to the Mg(2+) site.

The protein belongs to the D-alanine--D-alanine ligase family. Mg(2+) is required as a cofactor. Requires Mn(2+) as cofactor.

It is found in the cytoplasm. It catalyses the reaction 2 D-alanine + ATP = D-alanyl-D-alanine + ADP + phosphate + H(+). It functions in the pathway cell wall biogenesis; peptidoglycan biosynthesis. Cell wall formation. This Enterococcus faecalis (strain ATCC 700802 / V583) protein is D-alanine--D-alanine ligase (ddl).